The chain runs to 103 residues: Small ribosomal subunit protein uS10 (103 aa).

Belongs to the universal ribosomal protein uS10 family. In terms of assembly, part of the 30S ribosomal subunit.

In terms of biological role, involved in the binding of tRNA to the ribosomes. This chain is Small ribosomal subunit protein uS10, found in Pelodictyon phaeoclathratiforme (strain DSM 5477 / BU-1).